The chain runs to 120 residues: uncharacterized protein (120 aa).

This sequence to B.subtilis XkdH.

This is an uncharacterized protein from Bacillus subtilis (strain 168).